Consider the following 221-residue polypeptide: Hypoxanthine-guanine phosphoribosyltransferase (221 aa).

Serine 2 carries the post-translational modification N-acetylserine. Residues lysine 85, 110 to 118, lysine 159, and 188 to 194 each bind GMP; these read DEVDDTRTT and WYAYPWE. The active-site Proton acceptor is the aspartate 114.

The protein belongs to the purine/pyrimidine phosphoribosyltransferase family. Dimer. It depends on Mg(2+) as a cofactor.

Its subcellular location is the cytoplasm. The protein resides in the nucleus. It carries out the reaction IMP + diphosphate = hypoxanthine + 5-phospho-alpha-D-ribose 1-diphosphate. The enzyme catalyses GMP + diphosphate = guanine + 5-phospho-alpha-D-ribose 1-diphosphate. The protein operates within purine metabolism; IMP biosynthesis via salvage pathway; IMP from hypoxanthine: step 1/1. With respect to regulation, subject to feedback inhibition by GMP. In terms of biological role, converts guanine to guanosine monophosphate, and hypoxanthine to inosine monophosphate. Transfers the 5-phosphoribosyl group from 5-phosphoribosylpyrophosphate onto the purine. Plays a central role in the generation of purine nucleotides through the purine salvage pathway. This is Hypoxanthine-guanine phosphoribosyltransferase (HPT1) from Saccharomyces cerevisiae (strain ATCC 204508 / S288c) (Baker's yeast).